The sequence spans 359 residues: Spore germination protein GerQC (359 aa).

The N-terminal stretch at 1-16 is a signal peptide; that stretch reads MKRWILFLILSVFLIG. The N-palmitoyl cysteine moiety is linked to residue Cys17. Cys17 is lipidated: S-diacylglycerol cysteine.

It belongs to the GerABKC lipoprotein family.

It is found in the membrane. Required for the germination response to inosine. Has no role in L-alanine germination. The sequence is that of Spore germination protein GerQC (gerQC) from Bacillus cereus.